The primary structure comprises 396 residues: MAEFLRSQILGTTFETTNRYSDLQPVGLGAFGLVCSAYDMITRQPVAIKKMMKPFSNATLAKRTYREVKLLKHLRHENLIGLSDIFISPLEDVYLVTDLLGTDLNRLLTSKPLDGKFVQYFTYQLLRGLKYIHSAGVIHRDLKPSNILINENCDLKICDFGLARLQEPQMTGYVSTRYYRAPEIMLTWQKYGMQVDIWSAGCIVAEMLRGKPLFPGKDHINQFFLITDALGNPPDEVIERICTKTTLDLVKSLPKRQPAPWATLFPDSDENAIDLLGEMLIFDPDKRISAAKALEHPYLSVYHDPTDEPVAEQMFDWSFSEVAHSIDEWKIMIYTEVVDFHDIGPTEEPVITEPFLSPDPSLSPEVLDPLGQIQTQSMVTKSAETLDQDILQYLQI.

The Protein kinase domain maps to 20 to 299; sequence YSDLQPVGLG…AAKALEHPYL (280 aa). ATP is bound by residues 26 to 34 and Lys-49; that span reads VGLGAFGLV. Asp-141 serves as the catalytic Proton acceptor. Thr-171 carries the phosphothreonine modification. Positions 171–173 match the TXY motif; the sequence is TGY. Phosphotyrosine is present on Tyr-173.

This sequence belongs to the protein kinase superfamily. Ser/Thr protein kinase family. MAP kinase subfamily. HOG1 sub-subfamily. Requires Mg(2+) as cofactor. Dually phosphorylated on Thr-171 and Tyr-173, which activates the enzyme.

It carries out the reaction L-seryl-[protein] + ATP = O-phospho-L-seryl-[protein] + ADP + H(+). It catalyses the reaction L-threonyl-[protein] + ATP = O-phospho-L-threonyl-[protein] + ADP + H(+). Its activity is regulated as follows. Activated by tyrosine and threonine phosphorylation. Functionally, mitogen-activated protein kinase required for growth on media where sorbitol or mannitol is the sole carbon source. This is Mitogen-activated protein kinase mpkC (mpkC) from Aspergillus niger (strain ATCC MYA-4892 / CBS 513.88 / FGSC A1513).